The primary structure comprises 308 residues: Ribosomal RNA large subunit methyltransferase F (308 aa).

The protein belongs to the methyltransferase superfamily. METTL16/RlmF family.

Its subcellular location is the cytoplasm. The enzyme catalyses adenosine(1618) in 23S rRNA + S-adenosyl-L-methionine = N(6)-methyladenosine(1618) in 23S rRNA + S-adenosyl-L-homocysteine + H(+). Its function is as follows. Specifically methylates the adenine in position 1618 of 23S rRNA. This is Ribosomal RNA large subunit methyltransferase F from Escherichia coli (strain SMS-3-5 / SECEC).